A 321-amino-acid chain; its full sequence is S-methyl-5'-thioadenosine phosphorylase (321 aa).

Phosphate is bound by residues Thr30, 73-74 (RH), and 106-107 (SA). Residue Met215 participates in substrate binding. Residue Ser216 coordinates phosphate. 239–241 (DYD) serves as a coordination point for substrate.

It belongs to the PNP/MTAP phosphorylase family. MTAP subfamily. In terms of assembly, homotrimer.

It localises to the cytoplasm. Its subcellular location is the nucleus. It carries out the reaction S-methyl-5'-thioadenosine + phosphate = 5-(methylsulfanyl)-alpha-D-ribose 1-phosphate + adenine. Its pathway is amino-acid biosynthesis; L-methionine biosynthesis via salvage pathway; S-methyl-5-thio-alpha-D-ribose 1-phosphate from S-methyl-5'-thioadenosine (phosphorylase route): step 1/1. Catalyzes the reversible phosphorylation of S-methyl-5'-thioadenosine (MTA) to adenine and 5-methylthioribose-1-phosphate. Involved in the breakdown of MTA, a major by-product of polyamine biosynthesis. Responsible for the first step in the methionine salvage pathway after MTA has been generated from S-adenosylmethionine. Has broad substrate specificity with 6-aminopurine nucleosides as preferred substrates. The protein is S-methyl-5'-thioadenosine phosphorylase of Yarrowia lipolytica (strain CLIB 122 / E 150) (Yeast).